We begin with the raw amino-acid sequence, 367 residues long: Protein-glutamate methylesterase/protein-glutamine glutaminase 2 (367 aa).

The 118-residue stretch at 3–120 (SVVVVDDSAF…SLDIVRIEND (118 aa)) folds into the Response regulatory domain. Residue Asp54 is modified to 4-aspartylphosphate. A disordered region spans residues 132-174 (RMLRTPRPVRPAPTASAPAQTAQVASAAPATAPSRPAMPATRA). Low complexity predominate over residues 143–174 (APTASAPAQTAQVASAAPATAPSRPAMPATRA). The 193-residue stretch at 175-367 (SRPVRDVVAI…AAAIMNGLYK (193 aa)) folds into the CheB-type methylesterase domain. Catalysis depends on residues Ser187, His214, and Asp310.

Belongs to the CheB family. Phosphorylated by CheA. Phosphorylation of the N-terminal regulatory domain activates the methylesterase activity.

It localises to the cytoplasm. It catalyses the reaction [protein]-L-glutamate 5-O-methyl ester + H2O = L-glutamyl-[protein] + methanol + H(+). The enzyme catalyses L-glutaminyl-[protein] + H2O = L-glutamyl-[protein] + NH4(+). In terms of biological role, involved in chemotaxis. Part of a chemotaxis signal transduction system that modulates chemotaxis in response to various stimuli. Catalyzes the demethylation of specific methylglutamate residues introduced into the chemoreceptors (methyl-accepting chemotaxis proteins or MCP) by CheR. Also mediates the irreversible deamidation of specific glutamine residues to glutamic acid. The protein is Protein-glutamate methylesterase/protein-glutamine glutaminase 2 of Nitratidesulfovibrio vulgaris (strain ATCC 29579 / DSM 644 / CCUG 34227 / NCIMB 8303 / VKM B-1760 / Hildenborough) (Desulfovibrio vulgaris).